A 132-amino-acid chain; its full sequence is MTNENSIGIEFDFPEGILGFENIKTFIIKDSKHKPFSIMQSINKDVSFLVTSPFNFLNEYLPNIEEKDWSDIDAKAEDEKVILCIINMHVNDYKDITANLKAPIIINKKKLLGKQAICTNEKYSLRHKVFKE.

This sequence belongs to the FliW family. Interacts with translational regulator CsrA and flagellin(s).

It is found in the cytoplasm. In terms of biological role, acts as an anti-CsrA protein, binds CsrA and prevents it from repressing translation of its target genes, one of which is flagellin. Binds to flagellin and participates in the assembly of the flagellum. The polypeptide is Flagellar assembly factor FliW (Borreliella afzelii (strain PKo) (Borrelia afzelii)).